A 510-amino-acid polypeptide reads, in one-letter code: 2,3-bisphosphoglycerate-independent phosphoglycerate mutase (510 aa).

Residue Asp-12 coordinates Mn(2+). Tyr-36 carries the phosphotyrosine modification. Ser-62 lines the Mn(2+) pocket. The active-site Phosphoserine intermediate is Ser-62. Residues His-123, 153-154 (RD), Arg-185, Arg-191, 261-264 (RPDR), and Lys-336 contribute to the substrate site. Mn(2+)-binding residues include Asp-403, His-407, Asp-444, His-445, and His-462.

The protein belongs to the BPG-independent phosphoglycerate mutase family. As to quaternary structure, monomer. Requires Mn(2+) as cofactor.

The catalysed reaction is (2R)-2-phosphoglycerate = (2R)-3-phosphoglycerate. Its pathway is carbohydrate degradation; glycolysis; pyruvate from D-glyceraldehyde 3-phosphate: step 3/5. Its function is as follows. Essential for rapid growth and for sporulation. Catalyzes the interconversion of 2-phosphoglycerate and 3-phosphoglycerate. The sequence is that of 2,3-bisphosphoglycerate-independent phosphoglycerate mutase from Shouchella clausii (strain KSM-K16) (Alkalihalobacillus clausii).